The primary structure comprises 387 residues: Succinate--CoA ligase [ADP-forming] subunit beta (387 aa).

One can recognise an ATP-grasp domain in the interval 9 to 236; sequence KELFAKHNVP…RDATDPLELK (228 aa). ATP is bound by residues Lys45, 52 to 54, Ser94, and Glu99; that span reads GRG. Mg(2+) is bound by residues Asn191 and Asp205. Substrate-binding positions include Asn256 and 318–320; that span reads GIT.

The protein belongs to the succinate/malate CoA ligase beta subunit family. Heterotetramer of two alpha and two beta subunits. It depends on Mg(2+) as a cofactor.

The enzyme catalyses succinate + ATP + CoA = succinyl-CoA + ADP + phosphate. It catalyses the reaction GTP + succinate + CoA = succinyl-CoA + GDP + phosphate. Its pathway is carbohydrate metabolism; tricarboxylic acid cycle; succinate from succinyl-CoA (ligase route): step 1/1. Its function is as follows. Succinyl-CoA synthetase functions in the citric acid cycle (TCA), coupling the hydrolysis of succinyl-CoA to the synthesis of either ATP or GTP and thus represents the only step of substrate-level phosphorylation in the TCA. The beta subunit provides nucleotide specificity of the enzyme and binds the substrate succinate, while the binding sites for coenzyme A and phosphate are found in the alpha subunit. The polypeptide is Succinate--CoA ligase [ADP-forming] subunit beta (Mycobacterium sp. (strain JLS)).